A 1171-amino-acid chain; its full sequence is Phytochrome B (1171 aa).

The span at 1 to 19 (MASGSRATPTRSPSSARPA) shows a compositional bias: low complexity. Positions 1-53 (MASGSRATPTRSPSSARPAAPRHQHHHSQSSGGSTSRAGGGGGGGGGGGGGAA) are disordered. The span at 38-52 (AGGGGGGGGGGGGGA) shows a compositional bias: gly residues. In terms of domain architecture, GAF spans 259-442 (DVKLLCDTVV…AFGLQLNMEL (184 aa)). A phytochromobilin-binding site is contributed by C364. PAS domains lie at 661-732 (VARE…LRGD) and 795-866 (DYKA…MIVL). In terms of domain architecture, Histidine kinase spans 943–1161 (YIYQEIKNPL…FFHIVLELPQ (219 aa)).

Belongs to the phytochrome family. In terms of assembly, homodimer. Post-translationally, contains one covalently linked phytochromobilin chromophore.

Its function is as follows. Regulatory photoreceptor which exists in two forms that are reversibly interconvertible by light: the Pr form that absorbs maximally in the red region of the spectrum and the Pfr form that absorbs maximally in the far-red region. Photoconversion of Pr to Pfr induces an array of morphogenic responses, whereas reconversion of Pfr to Pr cancels the induction of those responses. Pfr controls the expression of a number of nuclear genes including those encoding the small subunit of ribulose-bisphosphate carboxylase, chlorophyll A/B binding protein, protochlorophyllide reductase, rRNA, etc. It also controls the expression of its own gene(s) in a negative feedback fashion. This is Phytochrome B (PHYB) from Oryza sativa subsp. japonica (Rice).